The primary structure comprises 266 residues: Glucosamine-6-phosphate deaminase (266 aa).

The Proton acceptor; for enolization step role is filled by D72. D141 (for ring-opening step) is an active-site residue. Residue H143 is the Proton acceptor; for ring-opening step of the active site. The active-site For ring-opening step is the E148.

It belongs to the glucosamine/galactosamine-6-phosphate isomerase family. NagB subfamily. Homohexamer.

It catalyses the reaction alpha-D-glucosamine 6-phosphate + H2O = beta-D-fructose 6-phosphate + NH4(+). It participates in amino-sugar metabolism; N-acetylneuraminate degradation; D-fructose 6-phosphate from N-acetylneuraminate: step 5/5. Allosterically activated by N-acetylglucosamine 6-phosphate (GlcNAc6P). Its function is as follows. Catalyzes the reversible isomerization-deamination of glucosamine 6-phosphate (GlcN6P) to form fructose 6-phosphate (Fru6P) and ammonium ion. The chain is Glucosamine-6-phosphate deaminase from Serratia proteamaculans (strain 568).